Consider the following 2036-residue polypeptide: Transmembrane channel-like protein (2036 aa).

Disordered stretches follow at residues 1 to 178 (MQND…IDDE) and 194 to 243 (SVRG…ESTQ). Residues 1-353 (MQNDEEPAAA…GVASYFTFLR (353 aa)) lie on the Cytoplasmic side of the membrane. The segment covering 58 to 73 (VGSSSSNGNTSNVATG) has biased composition (low complexity). Polar residues predominate over residues 74–90 (ANSENNSGVTSPHQLSV). Residues 125–134 (ASQEDHRSYE) show a composition bias toward basic and acidic residues. Over residues 166 to 178 (FDEDGGGGDIDDE) the composition is skewed to acidic residues. Basic residues predominate over residues 198-208 (YRGKRGSRSSR). Basic and acidic residues predominate over residues 216–225 (HVLDSVERRR). A compositionally biased stretch (polar residues) spans 227 to 243 (SVYTTSSEEGTNQESTQ). A helical membrane pass occupies residues 354–374 (WLMWVNIMIAIPLVAFVIGPE). Residues 375 to 395 (YFATKHGETDPRKRMSDPEAR) are Extracellular-facing. The helical transmembrane segment at 396-418 (VAGNLFTFWEFEGYLKYSPMFYG) threads the bilayer. The Cytoplasmic portion of the chain corresponds to 419–432 (YYSSTSGISTSGYK). The chain crosses the membrane as a helical span at residues 433 to 453 (LPLAYFLTAVLVYIYSFVATL). The Extracellular segment spans residues 454–526 (RKMAENSRNS…NRNWRVILQR (73 aa)). A helical transmembrane segment spans residues 527-547 (ILVNILVMGLLGLSGATVVLL). Residues 548–567 (VNHSEDLAKHDNWLSRNAVN) lie on the Cytoplasmic side of the membrane. The chain crosses the membrane as a helical span at residues 568 to 588 (VTMTLLSFFLPMIFEALGLFE). Topologically, residues 589–599 (NWHPRQQLRLQ) are extracellular. Residues 600-620 (LARIMILNMLNLYSLMFSFIY) traverse the membrane as a helical segment. At 621-1308 (KINSKEKPLQ…ILTLINNQGQ (688 aa)) the chain is on the cytoplasmic side. Disordered stretches follow at residues 789–839 (TTAT…TEAT), 860–967 (KPLG…TDQA), 996–1027 (FFTS…NATP), 1066–1143 (LRGR…EGSE), and 1186–1205 (GSTT…KQLT). Positions 870-885 (IPNSTTNSATLSTIPA) are enriched in polar residues. Low complexity predominate over residues 886–906 (TLNTTNLPLNSTTKLTTTTST). Over residues 933 to 952 (TSDAPDNNSYSDITDYSSEP) the composition is skewed to polar residues. A compositionally biased stretch (acidic residues) spans 953 to 967 (SEIEDFDEQESTDQA). 3 stretches are compositionally biased toward low complexity: residues 1069–1083 (RITT…STTT), 1091–1100 (RTTTTELTST), and 1107–1130 (TTES…SSST). A helical transmembrane segment spans residues 1309 to 1329 (VWMGIFFSPGLVLINLVKLMI). The Extracellular portion of the chain corresponds to 1330 to 1358 (MMYFRSWIVLTCNVPHEVVFKASKSNNFY). A helical transmembrane segment spans residues 1359–1379 (LSLLLTMLFLCVLPVGYAIVW). The Cytoplasmic portion of the chain corresponds to 1380 to 1423 (LRPSWHCGPFSEYNRIAEFITNTTRNALPKQLHEPLDYLTSSST). Residues 1424–1444 (VIPLLLLLILIIYYLVSLTGA) traverse the membrane as a helical segment. Residues 1445–2036 (LREANQDLRT…RIDIENEHEK (592 aa)) lie on the Extracellular side of the membrane. Disordered stretches follow at residues 1527-1572 (LRKG…SRLQ), 1592-1841 (ERAR…SRQG), and 1859-1990 (KKDD…IPTI). Basic and acidic residues-rich tracts occupy residues 1538 to 1566 (SFVR…DKRF), 1614 to 1640 (KETH…DKKD), 1658 to 1668 (SPKDNEHDPDT), 1727 to 1743 (HIVD…EDKP), and 1777 to 1793 (PEPE…ERSS). Residues 1806–1838 (NEPSGTEEQDRSLPSPTPSQGQGHHQRQLSVLS) are compositionally biased toward polar residues. Residues 1890–1899 (VLSSVSSSTA) are compositionally biased toward low complexity. Pro residues predominate over residues 1903–1914 (PPTPEPESPTPS). Residues 1976 to 1990 (QDSQSSIWSDNIPTI) show a composition bias toward polar residues.

Belongs to the TMC family. In terms of tissue distribution, expressed in multi-dendritic neurons of the labellum (md-L), which extend elaborate dendritic arbors innervating the bases of taste hairs (at protein level). In larvae, expressed in class I and class II dendritic arborization (da) neurons and bipolar dendrite (bd) neurons (at protein level). In adults, expressed in various sensory neurons including those in the mouth parts, olfactory neurons in the antenna, wing bristle neurons, haltere neurons, arista neurons, and many other sensory neurons, including a subset of chordotonal (Cho) neurons. Expressed in md-L axon terminals, including those that project into the subesophageal zone (SEZ). Also expressed in a small number of local neurons in the adult ventral nerve cord (VNC), and projections extending from a few neurons in the legs or wing hinges. In the adult mouth, expressed in a few multi-dendritic neurons of the ventral cibarial sensory organ (VCSO); the multiple elaborate dendritic branches form a brush-like structure that faces the luminal side of the food-passing tunnel. Also expressed in the oviduct and uterus of adult females.

Its subcellular location is the cell membrane. The protein localises to the cell projection. The protein resides in the dendrite. Its function is as follows. Probable ion channel. Component of mechanosensitive neurons that participates in proprioception, sensing food texture, and directing egg-laying site selection (oviposition). Component of multi-dendritic neurons of the labellum (md-L) where it is required for sensing the hardness and viscosity of their food, enabling them to behaviorally discriminate their preferred softness and smoothness from harder and stickier food options. Required as part of oviposition site selection process to relay mechanosensory and chemosensory information on the hardness and sweetness of potential egg-laying substrates, thus ensuring females select the most optimal site for their eggs survival. Females determine the softest substrate for their eggs first by making a coarse evaluation of substrate hardness using mechanosensitive channels nan and Piezo in the leg tarsal bristles, followed by a much finer assessment using nan, iav and Tmc mechanosensitive channels on the labellum. This protein is required to sense subtle differences in substrate stiffness (between 0.25% and 0.3% agarose), likely acting in the md-L neurons. Also required in neurons on the labellum, including the md-Ls, and possibly in the brain, to inhibit discrimination of egg-laying substrates of different hardness if the substrate contains sucrose. During oviposition evaluation, activation of sweet neurons by sucrose enhances the activity of the Tmc neurons resulting in females losing their softness preference in favor of egg-laying sites that contain sucrose. Acts in the larvae peripheral sensory neurons, to contribute to proprioception and sensory feedback for normal forward crawling behavior. Required for the normal activity of the proprioceptive sensory dendrites, ddaE which show preferential responses to forward locomotion, and ddaD which show preferential responses to backward locomotion. The polypeptide is Transmembrane channel-like protein (Drosophila melanogaster (Fruit fly)).